The primary structure comprises 253 residues: MGTILDKIVDQKKKEVAALYETYTPVKEKRKTRSLVKALEQFTVIAEVKRASPSKGDINLHVDVRKQVKTYEECGAGAVSVLTDGQFFKGSFYDLQTAREESSIPLLCKDFIIDKIQIDRAYEAGADIILLIVAALTKEKLKELYSYVLEKGLEAIVEVHDEQELEIAIQLNPHVIGINNRNLKTFEVDLSQTEKLGKRLNEEKLLWISESGIHSKEDIIRVKRAGAKGVLVGEALMTSSSIHTFFEDCKVNI.

This sequence belongs to the TrpC family.

It catalyses the reaction 1-(2-carboxyphenylamino)-1-deoxy-D-ribulose 5-phosphate + H(+) = (1S,2R)-1-C-(indol-3-yl)glycerol 3-phosphate + CO2 + H2O. Its pathway is amino-acid biosynthesis; L-tryptophan biosynthesis; L-tryptophan from chorismate: step 4/5. The polypeptide is Indole-3-glycerol phosphate synthase (Bacillus thuringiensis subsp. konkukian (strain 97-27)).